The primary structure comprises 21 residues: Alpha-fibrinogenase A1 (21 aa).

The protein belongs to the peptidase S1 family. Snake venom subfamily. As to quaternary structure, monomer. As to expression, expressed by the venom gland.

Its subcellular location is the secreted. With respect to regulation, inhibited by PMSF, bovine aprotinin (APR), and soybean trypsin inhibitor (STI). Is not inhibited by EDTA, beta-mercaptoethanol, and high temperature (85 degrees Celsius). Snake venom serine protease that completely cleaves fibrinogen Aalpha chain (FGA), partially cleaves Bbeta chain (FGB) and has no activity on gamma chain. Is more potent that A2 and A3 alpha-fibrinogenases. Very active within 5 minutes. The chain is Alpha-fibrinogenase A1 from Crotalus atrox (Western diamondback rattlesnake).